The chain runs to 169 residues: Endoribonuclease YbeY (169 aa).

3 residues coordinate Zn(2+): histidine 128, histidine 132, and histidine 138.

The protein belongs to the endoribonuclease YbeY family. Requires Zn(2+) as cofactor.

Its subcellular location is the cytoplasm. Functionally, single strand-specific metallo-endoribonuclease involved in late-stage 70S ribosome quality control and in maturation of the 3' terminus of the 16S rRNA. The chain is Endoribonuclease YbeY from Rhizorhabdus wittichii (strain DSM 6014 / CCUG 31198 / JCM 15750 / NBRC 105917 / EY 4224 / RW1) (Sphingomonas wittichii).